The sequence spans 456 residues: Enolase (456 aa).

Gln-164 contributes to the (2R)-2-phosphoglycerate binding site. The Proton donor role is filled by Glu-207. Mg(2+) contacts are provided by Asp-244, Glu-287, and Asp-314. Residues Lys-339, Arg-368, Ser-369, and Lys-390 each contribute to the (2R)-2-phosphoglycerate site. Catalysis depends on Lys-339, which acts as the Proton acceptor.

It belongs to the enolase family. As to quaternary structure, component of the RNA degradosome, a multiprotein complex involved in RNA processing and mRNA degradation. Mg(2+) serves as cofactor.

It localises to the cytoplasm. Its subcellular location is the secreted. The protein resides in the cell surface. It carries out the reaction (2R)-2-phosphoglycerate = phosphoenolpyruvate + H2O. It participates in carbohydrate degradation; glycolysis; pyruvate from D-glyceraldehyde 3-phosphate: step 4/5. Its function is as follows. Catalyzes the reversible conversion of 2-phosphoglycerate (2-PG) into phosphoenolpyruvate (PEP). It is essential for the degradation of carbohydrates via glycolysis. In Francisella tularensis subsp. novicida (strain U112), this protein is Enolase.